Reading from the N-terminus, the 424-residue chain is N-succinylarginine dihydrolase (424 aa).

Residues 19–28 (AGLSRGNVAS), Asn-110, and 137–138 (HR) contribute to the substrate site. The active site involves Glu-174. Arg-206 serves as a coordination point for substrate. The active site involves His-242. Positions 244 and 351 each coordinate substrate. The active-site Nucleophile is Cys-357.

This sequence belongs to the succinylarginine dihydrolase family. As to quaternary structure, homodimer.

It carries out the reaction N(2)-succinyl-L-arginine + 2 H2O + 2 H(+) = N(2)-succinyl-L-ornithine + 2 NH4(+) + CO2. It participates in amino-acid degradation; L-arginine degradation via AST pathway; L-glutamate and succinate from L-arginine: step 2/5. Catalyzes the hydrolysis of N(2)-succinylarginine into N(2)-succinylornithine, ammonia and CO(2). This Zymomonas mobilis subsp. mobilis (strain ATCC 31821 / ZM4 / CP4) protein is N-succinylarginine dihydrolase.